A 498-amino-acid chain; its full sequence is DNA-directed RNA polymerase subunit Rpo2N (498 aa).

It belongs to the RNA polymerase beta chain family. In terms of assembly, part of the RNA polymerase complex.

It localises to the cytoplasm. It carries out the reaction RNA(n) + a ribonucleoside 5'-triphosphate = RNA(n+1) + diphosphate. In terms of biological role, DNA-dependent RNA polymerase (RNAP) catalyzes the transcription of DNA into RNA using the four ribonucleoside triphosphates as substrates. The Rpo2 subunit (Rpo2N and Rpo2C in this organism) is implicated in DNA promoter recognition and in nucleotide binding. The chain is DNA-directed RNA polymerase subunit Rpo2N from Methanocaldococcus jannaschii (strain ATCC 43067 / DSM 2661 / JAL-1 / JCM 10045 / NBRC 100440) (Methanococcus jannaschii).